A 498-amino-acid polypeptide reads, in one-letter code: Glutamate--tRNA ligase (498 aa).

The 'HIGH' region motif lies at 12–22; it reads PSPTGHLHIGN. Positions 259–263 match the 'KMSKS' region motif; that stretch reads KLSKR. Lysine 262 contacts ATP.

This sequence belongs to the class-I aminoacyl-tRNA synthetase family. Glutamate--tRNA ligase type 1 subfamily. As to quaternary structure, monomer.

It is found in the cytoplasm. It carries out the reaction tRNA(Glu) + L-glutamate + ATP = L-glutamyl-tRNA(Glu) + AMP + diphosphate. In terms of biological role, catalyzes the attachment of glutamate to tRNA(Glu) in a two-step reaction: glutamate is first activated by ATP to form Glu-AMP and then transferred to the acceptor end of tRNA(Glu). The protein is Glutamate--tRNA ligase of Limosilactobacillus fermentum (strain NBRC 3956 / LMG 18251) (Lactobacillus fermentum).